We begin with the raw amino-acid sequence, 497 residues long: Argininosuccinate lyase (497 aa).

The protein belongs to the lyase 1 family. Argininosuccinate lyase subfamily.

Its subcellular location is the cytoplasm. The catalysed reaction is 2-(N(omega)-L-arginino)succinate = fumarate + L-arginine. The protein operates within amino-acid biosynthesis; L-arginine biosynthesis; L-arginine from L-ornithine and carbamoyl phosphate: step 3/3. The polypeptide is Argininosuccinate lyase (Clavibacter michiganensis subsp. michiganensis (strain NCPPB 382)).